A 137-amino-acid polypeptide reads, in one-letter code: CDGSH iron-sulfur domain-containing protein 3, mitochondrial (137 aa).

Lysine 65 bears the N6-acetyllysine; alternate mark. Position 65 is an N6-succinyllysine; alternate (lysine 65). [2Fe-2S] cluster is bound by residues cysteine 70, cysteine 72, cysteine 81, and histidine 85. Residue lysine 96 is modified to N6-acetyllysine. [2Fe-2S] cluster is bound by residues cysteine 108, cysteine 110, cysteine 119, and histidine 123. Position 124 is an N6-acetyllysine; alternate (lysine 124). Lysine 124 is modified (N6-succinyllysine; alternate).

Belongs to the CISD protein family. In terms of assembly, monomer. Requires [2Fe-2S] cluster as cofactor.

Its subcellular location is the mitochondrion. In terms of biological role, can transfer its iron-sulfur clusters to the apoferrodoxins FDX1 and FDX2. Contributes to mitochondrial iron homeostasis and in maintaining normal levels of free iron and reactive oxygen species, and thereby contributes to normal mitochondrial function. The polypeptide is CDGSH iron-sulfur domain-containing protein 3, mitochondrial (Cisd3) (Mus musculus (Mouse)).